A 224-amino-acid chain; its full sequence is Probable C-&gt;U-editing enzyme APOBEC-2 (224 aa).

A disordered region spans residues 1–25 (MAQKEEAAAAAEPASQNGEEVENLE). 2 residues coordinate Zn(2+): Glu60 and His98. The CMP/dCMP-type deaminase domain occupies 64–169 (GRNKTFLCYV…PEIQAALRKL (106 aa)). Glu100 acts as the Proton donor in catalysis. Zn(2+)-binding residues include Cys128 and Cys131.

This sequence belongs to the cytidine and deoxycytidylate deaminase family. Homotetramer. The cofactor is Zn(2+).

The enzyme catalyses cytidine(6666) in apoB mRNA + H2O + H(+) = uridine(6666) in apoB mRNA + NH4(+). Probable C to U editing enzyme whose physiological substrate is not yet known. Does not display detectable apoB mRNA editing. Has a low intrinsic cytidine deaminase activity. May play a role in the epigenetic regulation of gene expression through the process of active DNA demethylation. The protein is Probable C-&gt;U-editing enzyme APOBEC-2 (APOBEC2) of Bos taurus (Bovine).